The primary structure comprises 549 residues: Neutral amino acid transporter 9 (549 aa).

The disordered stretch occupies residues 1-27 (MDEDSKPLLGSVPTGDYYTDSLDPKQR). The Cytoplasmic segment spans residues 1 to 107 (MDEDSKPLLG…GGDSPIKNPS (107 aa)). The chain crosses the membrane as a helical span at residues 108–128 (IVTIFAIWNTMMGTSILSIPW). The interval 117–122 (TMMGTS) is important for arginine binding and amino acid transport. S122 is a binding site for arginine. The Lumenal segment spans residues 129 to 134 (GIKQAG). The chain crosses the membrane as a helical span at residues 135–155 (FTLGIIIIVLMGLLTLYCCYR). Over 156 to 186 (VLKSTKSIPYVDTSDWEFPDVCKYYFGGFGK) the chain is Cytoplasmic. A helical membrane pass occupies residues 187-213 (WSSLVFSLVSLIGAMVVYWVLMSNFLF). The Lumenal segment spans residues 214-271 (NTGKFIFNYVHNVNTSDAFGTNGTERVICPYPDVDPHGNSSTSLYSGSDNSTGLEFDH). N-linked (GlcNAc...) asparagine glycans are attached at residues N227, N235, N252, and N263. C242 and C412 are joined by a disulfide. Residues 272 to 288 (WWSKTNTIPFYLILLLL) form a helical membrane-spanning segment. The Cytoplasmic portion of the chain corresponds to 289–297 (PLLNFRSAS). A helical transmembrane segment spans residues 298–322 (FFARFTFLGTISVIYLIFLVTYKAI). Over 323–344 (QLGFHLEFHWFDSSMFFVPEFR) the chain is Lumenal. Residues 345–365 (TLFPQLSGVLTLAFFIHNCII) form a helical membrane-spanning segment. Topologically, residues 366 to 382 (TLMKNNKHQENNVRDLS) are cytoplasmic. Residues 383–403 (LAYLLVGLTYLYVGVLIFAAF) traverse the membrane as a helical segment. At 404 to 425 (PSPPLSKECIEPNFLDNFPSSD) the chain is on the lumenal side. The helical transmembrane segment at 426–446 (ILVFVARTFLLFQMTTVYPLL) threads the bilayer. The CARC motif motif lies at 432–442 (RTFLLFQMTTV). Positions 445–451 (LLGYLVR) match the CRAC motif motif. Topologically, residues 447 to 467 (GYLVRVQLMGQIFGNHYPGFL) are cytoplasmic. The helical transmembrane segment at 468-488 (HVFVLNVFVVGAGVLMARFYP) threads the bilayer. Topologically, residues 489–495 (NIGSIIR) are lumenal. The helical transmembrane segment at 496–516 (YSGALCGLALVFVLPSLIHMV) threads the bilayer. Residues 517-528 (SLKRRGELRWTS) are Cytoplasmic-facing. The helical transmembrane segment at 529–549 (TLFHGFLILLGVANLLGQFFM) threads the bilayer.

Belongs to the amino acid/polyamine transporter 2 family. SLC38A9 subfamily. Associated component of the Ragulator complex. Associated component of the Rag GTPases heterodimers (RRAGA and RRAGC). Post-translationally, glycosylated.

It localises to the lysosome membrane. The protein resides in the late endosome membrane. It catalyses the reaction L-leucine(in) = L-leucine(out). It carries out the reaction L-tyrosine(in) = L-tyrosine(out). The enzyme catalyses L-glutamine(out) = L-glutamine(in). The catalysed reaction is L-asparagine(out) = L-asparagine(in). With respect to regulation, amino acid transport activity is increased by sodium. Transport of L-glutamine, leucine and tyrosine is increased by arginine binding. Functionally, lysosomal amino acid transporter involved in the activation of mTORC1 in response to amino acid levels. Probably acts as an amino acid sensor of the Rag GTPases and Ragulator complexes, 2 complexes involved in amino acid sensing and activation of mTORC1, a signaling complex promoting cell growth in response to growth factors, energy levels, and amino acids. Following activation by amino acids, the Ragulator and Rag GTPases function as a scaffold recruiting mTORC1 to lysosomes where it is in turn activated. SLC38A9 mediates transport of amino acids with low capacity and specificity with a slight preference for polar amino acids. Acts as an arginine sensor. Following activation by arginine binding, mediates transport of L-glutamine, leucine and tyrosine with high efficiency, and is required for the efficient utilization of these amino acids after lysosomal protein degradation. However, the transport mechanism is not well defined and the role of sodium is not clear. Guanine exchange factor (GEF) that, upon arginine binding, stimulates GDP release from RRAGA and therefore activates the Rag GTPase heterodimer and the mTORC1 pathway in response to nutrient sufficiency. This is Neutral amino acid transporter 9 from Danio rerio (Zebrafish).